Here is a 317-residue protein sequence, read N- to C-terminus: Putative 2-hydroxyacid dehydrogenase SA2098 (317 aa).

NAD(+) contacts are provided by residues 155–156, 234–236, and D260; these read EI and ASR. The active site involves R236. Residue E265 is part of the active site. H283 serves as the catalytic Proton donor. Position 283–286 (283–286) interacts with NAD(+); it reads HIGN.

The protein belongs to the D-isomer specific 2-hydroxyacid dehydrogenase family.

In Staphylococcus aureus (strain N315), this protein is Putative 2-hydroxyacid dehydrogenase SA2098.